We begin with the raw amino-acid sequence, 204 residues long: 3-isopropylmalate dehydratase small subunit (204 aa).

This sequence belongs to the LeuD family. LeuD type 1 subfamily. Heterodimer of LeuC and LeuD.

It carries out the reaction (2R,3S)-3-isopropylmalate = (2S)-2-isopropylmalate. Its pathway is amino-acid biosynthesis; L-leucine biosynthesis; L-leucine from 3-methyl-2-oxobutanoate: step 2/4. In terms of biological role, catalyzes the isomerization between 2-isopropylmalate and 3-isopropylmalate, via the formation of 2-isopropylmaleate. This chain is 3-isopropylmalate dehydratase small subunit, found in Clavibacter michiganensis subsp. michiganensis (strain NCPPB 382).